Consider the following 214-residue polypeptide: Thymidylate kinase (214 aa).

Residue Gly7 to Thr14 coordinates ATP.

It belongs to the thymidylate kinase family.

It carries out the reaction dTMP + ATP = dTDP + ADP. Its function is as follows. Phosphorylation of dTMP to form dTDP in both de novo and salvage pathways of dTTP synthesis. The sequence is that of Thymidylate kinase from Desulfosudis oleivorans (strain DSM 6200 / JCM 39069 / Hxd3) (Desulfococcus oleovorans).